A 550-amino-acid chain; its full sequence is Methyl-coenzyme M reductase subunit alpha (550 aa).

Q147 is a binding site for coenzyme F430. Coenzyme B contacts are provided by residues R225, 256–257, and R270; that span reads KH. A Pros-methylhistidine modification is found at H257. R271 is modified (5-methylarginine). Residue Y333 participates in coenzyme M binding. A 2-methylglutamine modification is found at Q400. Coenzyme M is bound at residue Y444. At G445 the chain carries 1-thioglycine. (Z)-2,3-didehydroaspartate is present on D450. C452 is modified (S-methylcysteine).

The protein belongs to the methyl-coenzyme M reductase alpha subunit family. As to quaternary structure, MCR is a hexamer of two alpha, two beta, and two gamma chains, forming a dimer of heterotrimers. The cofactor is coenzyme F430. In terms of processing, the alpha subunit contains six modified amino acids near the active site region. Is methylated on His-257, Arg-271, Gln-400 and Cys-452, probably by the action of specific S-adenosylmethionine-dependent methyltransferases. Also contains a thioglycine at position 445, forming a thiopeptide bond. Contains a didehydroaspartate residue at position 450. The methylation on C5 of Arg-271 is a post-translational methylation not essential in vivo, but which plays a role for the stability and structural integrity of MCR.

Its subcellular location is the cytoplasm. The enzyme catalyses coenzyme B + methyl-coenzyme M = methane + coenzyme M-coenzyme B heterodisulfide. It functions in the pathway one-carbon metabolism; methyl-coenzyme M reduction; methane from methyl-coenzyme M: step 1/1. Functionally, component of the methyl-coenzyme M reductase (MCR) I that catalyzes the reductive cleavage of methyl-coenzyme M (CoM-S-CH3 or 2-(methylthio)ethanesulfonate) using coenzyme B (CoB or 7-mercaptoheptanoylthreonine phosphate) as reductant which results in the production of methane and the mixed heterodisulfide of CoB and CoM (CoM-S-S-CoB). This is the final step in methanogenesis. The polypeptide is Methyl-coenzyme M reductase subunit alpha (mcrA) (Methanothermobacter thermautotrophicus (strain ATCC 29096 / DSM 1053 / JCM 10044 / NBRC 100330 / Delta H) (Methanobacterium thermoautotrophicum)).